The following is a 334-amino-acid chain: Testis-specific Y-encoded protein 1 (334 aa).

The residue at position 4 (serine 4) is a Phosphoserine. Disordered regions lie at residues 27–46 (LEGEPSVQAPEQSPGAPAGD) and 96–146 (NEGE…AERR). Basic and acidic residues-rich tracts occupy residues 96–108 (NEGEEVKDQKQEG) and 115–128 (ELEKNPEQACDSKD).

It belongs to the nucleosome assembly protein (NAP) family. In terms of processing, phosphorylated. In terms of tissue distribution, testis.

It is found in the cytoplasm. The protein resides in the nucleus. In terms of biological role, may be involved in sperm differentiation and proliferation. This Rattus norvegicus (Rat) protein is Testis-specific Y-encoded protein 1 (Tspy1).